We begin with the raw amino-acid sequence, 1026 residues long: Cadherin-like and PC-esterase domain-containing protein 1 (1026 aa).

The N-terminal stretch at 1–34 (MVCRPVFPCRRRFCPRPFLVGLVVAICLFYQTLT) is a signal peptide. Asn-251, Asn-404, Asn-413, Asn-737, Asn-791, and Asn-985 each carry an N-linked (GlcNAc...) asparagine glycan.

This sequence belongs to the PC-esterase family.

This chain is Cadherin-like and PC-esterase domain-containing protein 1 (CPED1), found in Homo sapiens (Human).